A 1034-amino-acid polypeptide reads, in one-letter code: Isoleucine--tRNA ligase (1034 aa).

The 'HIGH' region signature appears at Pro46–Thr56. Residues Lys598–Ser602 carry the 'KMSKS' region motif. ATP is bound at residue Lys601.

It belongs to the class-I aminoacyl-tRNA synthetase family. IleS type 2 subfamily. In terms of assembly, monomer. It depends on Zn(2+) as a cofactor.

It is found in the cytoplasm. The enzyme catalyses tRNA(Ile) + L-isoleucine + ATP = L-isoleucyl-tRNA(Ile) + AMP + diphosphate. In terms of biological role, catalyzes the attachment of isoleucine to tRNA(Ile). As IleRS can inadvertently accommodate and process structurally similar amino acids such as valine, to avoid such errors it has two additional distinct tRNA(Ile)-dependent editing activities. One activity is designated as 'pretransfer' editing and involves the hydrolysis of activated Val-AMP. The other activity is designated 'posttransfer' editing and involves deacylation of mischarged Val-tRNA(Ile). The chain is Isoleucine--tRNA ligase from Methanococcus maripaludis (strain DSM 14266 / JCM 13030 / NBRC 101832 / S2 / LL).